The primary structure comprises 341 residues: Phenylalanine--tRNA ligase alpha subunit (341 aa).

Glu256 contributes to the Mg(2+) binding site.

Belongs to the class-II aminoacyl-tRNA synthetase family. Phe-tRNA synthetase alpha subunit type 1 subfamily. As to quaternary structure, tetramer of two alpha and two beta subunits. The cofactor is Mg(2+).

The protein localises to the cytoplasm. The enzyme catalyses tRNA(Phe) + L-phenylalanine + ATP = L-phenylalanyl-tRNA(Phe) + AMP + diphosphate + H(+). The sequence is that of Phenylalanine--tRNA ligase alpha subunit from Clostridium perfringens (strain 13 / Type A).